Consider the following 685-residue polypeptide: Mitotic interactor and substrate of PLK1 (685 aa).

Serine 78 bears the Phosphoserine; by CDK1 mark. Disordered regions lie at residues 155 to 181 (SGTVATLQAAPDHGDPRTPGPPRSTPL) and 207 to 253 (NKEV…QGKG). A Phosphothreonine; by CDK1 modification is found at threonine 172. Threonine 179 bears the Phosphothreonine mark. A Phosphoserine; by CDK1 modification is found at serine 214. Threonine 219 carries the post-translational modification Phosphothreonine. At serine 284 the chain carries Phosphoserine; by CDK1. Threonine 287 carries the post-translational modification Phosphothreonine; by CDK1. Positions 345 to 499 (GRPSLYVQRD…PWKLPRGSPQ (155 aa)) are disordered. The residue at position 348 (serine 348) is a Phosphoserine. Over residues 355–371 (MVQETQREEDHRREGLH) the composition is skewed to basic and acidic residues. Position 377 is a phosphothreonine; by CDK1 (threonine 377). Position 382 is a phosphoserine (serine 382). Low complexity predominate over residues 392-417 (ALSSDSILSPDSILSPAPDARAADPA). A phosphoserine; by PLK1 mark is found at serine 394, serine 395, and serine 397. Serine 406 and serine 436 each carry phosphoserine. Positions 454-469 (SGLSTVDTEAATSPKA) are enriched in polar residues. Serine 477 is modified (phosphoserine; by PLK1). Residues 478-488 (ESSGKPMSTKQ) show a composition bias toward polar residues. A phosphoserine mark is found at serine 547 and serine 549. Residues 551–575 (DLLERERESVLRREREVAEERRNAL) adopt a coiled-coil conformation. Disordered regions lie at residues 575–607 (LFPEVFSPTPDESCDQNSRSSSQASGITGSYSV) and 629–651 (PVDSAPPGQRKKEQWYAGINPSD). Serine 581 bears the Phosphoserine; by PLK1 mark. Threonine 583 carries the phosphothreonine modification. The span at 589–607 (DQNSRSSSQASGITGSYSV) shows a compositional bias: polar residues. Serine 592 bears the Phosphoserine; by PLK1 mark. Residue serine 681 is modified to Phosphoserine.

This sequence belongs to the MISP family. Associates with F-actin. Interacts with DCTN1; this interaction regulates DCTN1 distribution at the cell cortex. Interacts with PTK2/FAK and MAPRE1. Phosphorylated by CDK1 and PLK1. CDK1 is the priming kinase for PLK1 phosphorylation. Phosphorylation by PLK1 is required for proper spindle orientation at metaphase.

It localises to the cell junction. It is found in the focal adhesion. The protein localises to the cytoplasm. The protein resides in the cytoskeleton. Its subcellular location is the cell cortex. Functionally, plays a role in mitotic spindle orientation and mitotic progression. Regulates the distribution of dynactin at the cell cortex in a PLK1-dependent manner, thus stabilizing cortical and astral microtubule attachments required for proper mitotic spindle positioning. May link microtubules to the actin cytospkeleton and focal adhesions. May be required for directed cell migration and centrosome orientation. May also be necessary for proper stacking of the Golgi apparatus. The polypeptide is Mitotic interactor and substrate of PLK1 (Pongo abelii (Sumatran orangutan)).